The chain runs to 68 residues: MPRWNVCSYCGREFEPGTGKMFVRNDGRVLFFCSSKCEKYYFMGRNPRKLKWTKAFQEARLQRAKRRK.

4 residues coordinate Zn(2+): C7, C10, C33, and C37. The C4-type zinc-finger motif lies at 7–37 (CSYCGREFEPGTGKMFVRNDGRVLFFCSSKC).

The protein belongs to the eukaryotic ribosomal protein eL24 family. Part of the 50S ribosomal subunit. Forms a cluster with proteins L3 and L14. Zn(2+) is required as a cofactor.

In terms of biological role, binds to the 23S rRNA. This is Large ribosomal subunit protein eL24 from Thermococcus onnurineus (strain NA1).